The chain runs to 309 residues: Cutinase (309 aa).

The signal sequence occupies residues 1-47 (MSALTSQPTSSGSSEKIPRLRGWRAKAAGVVLAALALTTGVAAPAPA). Residue Ser178 is the Nucleophile of the active site. Residues Asp224 and His256 each act as charge relay system in the active site. Cys289 and Cys305 are joined by a disulfide.

It belongs to the AB hydrolase superfamily.

The protein localises to the secreted. It carries out the reaction a carboxylic ester + H2O = an alcohol + a carboxylate + H(+). It catalyses the reaction a triacylglycerol + H2O = a diacylglycerol + a fatty acid + H(+). The catalysed reaction is 1,2,3-tri-(9Z-octadecenoyl)-glycerol + H2O = di-(9Z)-octadecenoylglycerol + (9Z)-octadecenoate + H(+). The enzyme catalyses (6-hydroxyhexanoyl)(n) + H2O = (6-hydroxyhexanoyl)(n-1) + 6-hydroxyhexanoate + H(+). It carries out the reaction cutin + H2O = cutin monomers.. With respect to regulation, no effect on activity by SDS or chelating agents ethylenediaminetetraacetic acid (EDTA) or sodium citrate. No effect on activity by metal ions Ag(+), Ba(2+), Ca(2+), Co(2+), Cu(2+), Mn(2+), Ni(2+), Pb(2+) or Zn(2+). Activated by 1 mM digitonin and sodium deoxycholate, and reducing agents 1 mM 1,4-dithiothreitol, beta-mercaptoethanol and ascorbic acid. Activated by benzene, n-hexane, p-xylene and toluene. Activated by Fe(3+). Inhibited slightly by 1 mM of different chain length fatty acids, and only marginally by 6.0 M urea. Inhibited strongly with chemical modification by reagents phenyl methyl sulfonylfluorid (PMSF), 1-ethyl-3-(3-dimethylaminopropyl) carbodiimide (EDAC), diethylpyrocarbonate (DEPC) and N-bromosuccinimide (NBS). Inhibited by pyridine, DMSO, t-butanol and dodecane. Inhibited by Li(+), Hg(2+) and Mg(2+). No inhibition with chemical modification by reagents N-acetylimidazole (NAI), citraconic anhydride (CA), iodoacetate (IA) and phenylglyoxal (PG). Its function is as follows. Catalyzes the hydrolysis of cutin, a polyester that forms the structure of plant cuticle. Shows esterase activity towards p-nitrophenol-linked aliphatic esters (pNP-aliphatic esters). Has a preference for medium chain length (C-4 to C-12) fatty acid esters. Active with p-nitrophenyl palmitate (p-NPP) as substrate. Hydrolyzes triacylglycerol substrates non-specifically with a preference for long, unsaturated fatty acyl chains with the highest activity for triolein. Substrates with cis-9 unsaturation are preferred over the saturated triacylglycerols. Hydrolyzes a wide range of natural oils, especially olive oil, with relatively high activity. Capable of catalyzing synthesis of the flavor ester isoamyl acetate by esterification of isoamyl alcohol using acetic acid as an acyl donor. Degrades synthetic aliphatic polyesters, namely poly(1,4-butylene succinate) extended with 1,6-diisocyanatohexane (PBSc-D) and poly(epsilon-caprolactone) (PCL) plastics. Does not degrade poly(lactic acid) (PLA) nor aromatic poly(ethylene terephthalate) (PET), the most abundant polyester plastic in the world. This Amycolatopsis mediterranei (strain S699) (Nocardia mediterranei) protein is Cutinase.